The sequence spans 452 residues: Pup--protein ligase (452 aa).

E9 is a Mg(2+) binding site. Position 53 (R53) interacts with ATP. Y55 provides a ligand contact to Mg(2+). The active-site Proton acceptor is the D57. E63 lines the Mg(2+) pocket. T66 and W419 together coordinate ATP.

Belongs to the Pup ligase/Pup deamidase family. Pup-conjugating enzyme subfamily.

It catalyses the reaction ATP + [prokaryotic ubiquitin-like protein]-L-glutamate + [protein]-L-lysine = ADP + phosphate + N(6)-([prokaryotic ubiquitin-like protein]-gamma-L-glutamyl)-[protein]-L-lysine.. It functions in the pathway protein degradation; proteasomal Pup-dependent pathway. It participates in protein modification; protein pupylation. Its function is as follows. Catalyzes the covalent attachment of the prokaryotic ubiquitin-like protein modifier Pup to the proteasomal substrate proteins, thereby targeting them for proteasomal degradation. This tagging system is termed pupylation. The ligation reaction involves the side-chain carboxylate of the C-terminal glutamate of Pup and the side-chain amino group of a substrate lysine. This is Pup--protein ligase from Thermobifida fusca (strain YX).